The following is a 184-amino-acid chain: MNLDDLFEQKGEVAKSVLEELEKVMGEYGYNIEHILMVDIIPDDSVRRAMNEINAAQRMQLASLYKGEAEKILQVKRAEAEAEAKYLGGVGVARQRQAITDGLRENILNFSHKVEGTSAKEVMDLIMITQYFDTIKDLGNSSKNTTVFIPHGPGHVRDIGEQIRNGLMESARAGINIERFCISP.

The polypeptide is Protein PPLZ12 (PPLZ12) (Lupinus polyphyllus (Large-leaved lupine)).